A 341-amino-acid polypeptide reads, in one-letter code: Probable membrane-associated kinase regulator 1 (341 aa).

Disordered stretches follow at residues 1–29 (MRRQ…FEFN), 67–122 (TLGS…SSRP), 158–185 (PKTN…KRMS), 206–230 (LSPK…NNIR), and 288–310 (RGGF…SVSS). Composition is skewed to low complexity over residues 12–29 (PPQS…FEFN), 67–108 (TLGS…SFPL), and 167–180 (SSSS…APSS). Positions 208–230 (PKQSSNIKTESSSSLKDSGNNIR) are enriched in polar residues. Low complexity predominate over residues 297 to 310 (SCSSSSSNNNSVSS).

As to quaternary structure, a C-terminus-derived peptide binds BRI1 in vitro.

The protein resides in the cell membrane. In terms of biological role, may negatively regulate brassinosteroid signaling. The polypeptide is Probable membrane-associated kinase regulator 1 (MAKR1) (Arabidopsis thaliana (Mouse-ear cress)).